We begin with the raw amino-acid sequence, 156 residues long: MPRKGNIAKRDVLADPVYNSKLVTKLINHLMIDGKKAKASSILYDAFGIIQDKTGKEPVEVFEEAMNNVMPVLEVKARRIGGSNYQIPVEVRPERRTTLGLRWLVSYARLRNEHTMDERLANEIMDAANNTGSAVKKREDVHRMAEANRAFAHYRF.

It belongs to the universal ribosomal protein uS7 family. Part of the 30S ribosomal subunit. Contacts proteins S9 and S11.

Functionally, one of the primary rRNA binding proteins, it binds directly to 16S rRNA where it nucleates assembly of the head domain of the 30S subunit. Is located at the subunit interface close to the decoding center, probably blocks exit of the E-site tRNA. This Lactobacillus johnsonii (strain CNCM I-12250 / La1 / NCC 533) protein is Small ribosomal subunit protein uS7.